The sequence spans 344 residues: Protein POLAR LOCALIZATION DURING ASYMMETRIC DIVISION AND REDISTRIBUTION (344 aa).

Phosphothreonine; by ASK7 is present on Thr19. Ser79 is modified (phosphoserine; by ASK7). 2 positions are modified to phosphothreonine; by ASK7: Thr84 and Thr86. Phosphoserine; by ASK7 occurs at positions 91 and 94. Phosphothreonine; by ASK7 is present on residues Thr193, Thr217, and Thr233. Ser235 bears the Phosphoserine; by ASK7 mark. Residues 262–297 adopt a coiled-coil conformation; the sequence is LETRQQEELVKLETALNRVERRLQEKETEVSWWKDA. A phosphoserine; by ASK7 mark is found at Ser308, Ser309, Ser320, Ser321, and Ser336.

As to quaternary structure, component of a complex made of POLAR, BASL, ASK7/BIN2 and ASK3/SK12. Interacts with BASL, ASK7/BIN2 and ASK3/SK12. Phosphorylation by ASK7/BIN2 is increases turnover. Expressed in stomatal lineage cells with asymmetric division potential.

It localises to the cytoplasm. Its subcellular location is the cell cortex. Its function is as follows. Regulates asymmetric cell division (ACD), especially in stomatal-lineage cells. Acts as a stomatal lineage scaffold which regulates subcellular localization and transient polarization of kinases (e.g. ASK7/BIN2 and ASK3/SK12) involved in ACD in a BASL-dependent manner. Promotes the differentiation of both pavement cells and stomata. This Arabidopsis thaliana (Mouse-ear cress) protein is Protein POLAR LOCALIZATION DURING ASYMMETRIC DIVISION AND REDISTRIBUTION.